Here is a 172-residue protein sequence, read N- to C-terminus: Type IV secretion system putative outer membrane lipoprotein BMEII0036 (172 aa).

The first 15 residues, 1 to 15 (MRTLVMVACAVSLAA), serve as a signal peptide directing secretion. The N-palmitoyl cysteine moiety is linked to residue Cys16. Cys16 carries the S-diacylglycerol cysteine lipid modification. Positions 58–172 (WPARPPKQTV…RRVDIEILRK (115 aa)) constitute an OmpA-like domain.

Its subcellular location is the cell outer membrane. This chain is Type IV secretion system putative outer membrane lipoprotein BMEII0036, found in Brucella melitensis biotype 1 (strain ATCC 23456 / CCUG 17765 / NCTC 10094 / 16M).